The following is a 609-amino-acid chain: Pentatricopeptide repeat-containing protein At5g13770, chloroplastic (609 aa).

Residues 1-44 constitute a chloroplast transit peptide; sequence MAIASGSWVATVNHHANPHSFTSPTKPIFFLSQKPHNFHVCSSR. PPR repeat units lie at residues 103-137, 138-168, 172-207, 208-242, 247-281, 282-316, 317-351, 352-386, 387-421, 422-456, 457-491, 492-526, and 527-561; these read ELRTTKHLISYLVSSKSWDLLVSVCEDLREHKALP, DGQTCSNLIRSCIRDRKFRITHCLLSVFRSD, AVSASDAAMKGFNKLQMYSSTIQVFDRLKQSVGVEP, SPGCYCRIMEAHEKIGENHKVVELFQEFKSQRLSF, SGSIYTIVCSSLAKSGRAFEALEVLEEMKDKGIPE, SSELYSMLIRAFAEAREVVITEKLFKEAGGKKLLK, DPEMCLKVVLMYVREGNMETTLEVVAAMRKAELKV, TDCILCAIVNGFSKQRGFAEAVKVYEWAMKEECEA, GQVTYAIAINAYCRLEKYNKAEMLFDEMVKKGFDK, CVVAYSNIMDMYGKTRRLSDAVRLMAKMKQRGCKP, NIWIYNSLIDMHGRAMDLRRAEKIWKEMKRAKVLP, DKVSYTSMISAYNRSKELERCVELYQEFRMNRGKI, and DRAMAGIMVGVFSKTSRIDELMRLLQDMKVEGTRL.

The protein belongs to the PPR family. P subfamily.

It is found in the plastid. The protein localises to the chloroplast. This is Pentatricopeptide repeat-containing protein At5g13770, chloroplastic from Arabidopsis thaliana (Mouse-ear cress).